Here is a 226-residue protein sequence, read N- to C-terminus: Phosphoribosylformylglycinamidine synthase subunit PurQ (226 aa).

A Glutamine amidotransferase type-1 domain is found at 2–226; the sequence is KIAVIVFPGS…LENGTVIAEG (225 aa). C86 acts as the Nucleophile in catalysis. Active-site residues include H195 and E197.

In terms of assembly, part of the FGAM synthase complex composed of 1 PurL, 1 PurQ and 2 PurS subunits.

The protein resides in the cytoplasm. The catalysed reaction is N(2)-formyl-N(1)-(5-phospho-beta-D-ribosyl)glycinamide + L-glutamine + ATP + H2O = 2-formamido-N(1)-(5-O-phospho-beta-D-ribosyl)acetamidine + L-glutamate + ADP + phosphate + H(+). It carries out the reaction L-glutamine + H2O = L-glutamate + NH4(+). It functions in the pathway purine metabolism; IMP biosynthesis via de novo pathway; 5-amino-1-(5-phospho-D-ribosyl)imidazole from N(2)-formyl-N(1)-(5-phospho-D-ribosyl)glycinamide: step 1/2. Functionally, part of the phosphoribosylformylglycinamidine synthase complex involved in the purines biosynthetic pathway. Catalyzes the ATP-dependent conversion of formylglycinamide ribonucleotide (FGAR) and glutamine to yield formylglycinamidine ribonucleotide (FGAM) and glutamate. The FGAM synthase complex is composed of three subunits. PurQ produces an ammonia molecule by converting glutamine to glutamate. PurL transfers the ammonia molecule to FGAR to form FGAM in an ATP-dependent manner. PurS interacts with PurQ and PurL and is thought to assist in the transfer of the ammonia molecule from PurQ to PurL. The protein is Phosphoribosylformylglycinamidine synthase subunit PurQ of Limosilactobacillus fermentum (strain NBRC 3956 / LMG 18251) (Lactobacillus fermentum).